Reading from the N-terminus, the 101-residue chain is Aspartyl/glutamyl-tRNA(Asn/Gln) amidotransferase subunit C (101 aa).

This sequence belongs to the GatC family. In terms of assembly, heterotrimer of A, B and C subunits.

The enzyme catalyses L-glutamyl-tRNA(Gln) + L-glutamine + ATP + H2O = L-glutaminyl-tRNA(Gln) + L-glutamate + ADP + phosphate + H(+). It catalyses the reaction L-aspartyl-tRNA(Asn) + L-glutamine + ATP + H2O = L-asparaginyl-tRNA(Asn) + L-glutamate + ADP + phosphate + 2 H(+). In terms of biological role, allows the formation of correctly charged Asn-tRNA(Asn) or Gln-tRNA(Gln) through the transamidation of misacylated Asp-tRNA(Asn) or Glu-tRNA(Gln) in organisms which lack either or both of asparaginyl-tRNA or glutaminyl-tRNA synthetases. The reaction takes place in the presence of glutamine and ATP through an activated phospho-Asp-tRNA(Asn) or phospho-Glu-tRNA(Gln). The protein is Aspartyl/glutamyl-tRNA(Asn/Gln) amidotransferase subunit C of Lactobacillus delbrueckii subsp. bulgaricus (strain ATCC 11842 / DSM 20081 / BCRC 10696 / JCM 1002 / NBRC 13953 / NCIMB 11778 / NCTC 12712 / WDCM 00102 / Lb 14).